Here is an 85-residue protein sequence, read N- to C-terminus: MDISRAEQRILHLLAQGGRIEIIRSETKKIEAASCFTRDGWLYPGFDLTLFRKLKHLKAIKSSGGHPYRITERGLRLVRAQLDNR.

It belongs to the UPF0386 family.

The chain is UPF0386 protein Arad_1912 from Rhizobium rhizogenes (strain K84 / ATCC BAA-868) (Agrobacterium radiobacter).